Reading from the N-terminus, the 163-residue chain is Nucleotide-binding protein APJL_1242 (163 aa).

It belongs to the YajQ family.

Its function is as follows. Nucleotide-binding protein. In Actinobacillus pleuropneumoniae serotype 3 (strain JL03), this protein is Nucleotide-binding protein APJL_1242.